The primary structure comprises 185 residues: MKYLIVGLGNIGGEYNGTRHNVGFRMVNALAEDGGVQFVEARYGAIARMRVKNAELILLKPNTYMNLSGNAVRYWMQQENIPREQVLVLVDDLALPFGTLRLKPKGSDAGHNGLKNIAEVMGSIDYARLRFGLGDEFSKGRQVDFVLGRFTPEEEEKLPELTKHAVEIIKSFCLAGIQRTMNRYN.

Tyrosine 15 is a binding site for tRNA. Histidine 20 acts as the Proton acceptor in catalysis. Positions 64, 66, and 112 each coordinate tRNA.

Belongs to the PTH family. In terms of assembly, monomer.

The protein resides in the cytoplasm. The enzyme catalyses an N-acyl-L-alpha-aminoacyl-tRNA + H2O = an N-acyl-L-amino acid + a tRNA + H(+). Hydrolyzes ribosome-free peptidyl-tRNAs (with 1 or more amino acids incorporated), which drop off the ribosome during protein synthesis, or as a result of ribosome stalling. Functionally, catalyzes the release of premature peptidyl moieties from peptidyl-tRNA molecules trapped in stalled 50S ribosomal subunits, and thus maintains levels of free tRNAs and 50S ribosomes. This is Peptidyl-tRNA hydrolase from Porphyromonas gingivalis (strain ATCC BAA-308 / W83).